A 374-amino-acid chain; its full sequence is Mitochondrial import inner membrane translocase subunit tim50 (374 aa).

A mitochondrion-targeting transit peptide spans Met-1–Ser-48. A disordered region spans residues Thr-42–Lys-97. Basic and acidic residues-rich tracts occupy residues Pro-49–Glu-72 and Glu-81–Lys-93. Residues Ile-103–Thr-125 traverse the membrane as a helical segment. Residues Pro-191–Phe-332 enclose the FCP1 homology domain.

This sequence belongs to the TIM50 family. In terms of assembly, component of the mitochondrial import inner membrane translocase complex.

It is found in the mitochondrion inner membrane. Its function is as follows. Component of the mitochondrial import inner membrane translocase that mediates the translocation of transit peptide-containing proteins across the mitochondrial inner membrane. The chain is Mitochondrial import inner membrane translocase subunit tim50 (timm50) from Dictyostelium discoideum (Social amoeba).